We begin with the raw amino-acid sequence, 200 residues long: uncharacterized protein (200 aa).

The N-terminal stretch at 1–24 (MSRVFSCVLRACVCAGLCCWVCMG) is a signal peptide. The tract at residues 124-200 (GGRDLPMHGA…GEGGDNGEGE (77 aa)) is disordered. Residues 184–200 (LGDEGETGEGGDNGEGE) show a composition bias toward acidic residues.

This is an uncharacterized protein from Homo sapiens (Human).